Reading from the N-terminus, the 467-residue chain is NADH-ubiquinone oxidoreductase chain 4 (467 aa).

13 helical membrane-spanning segments follow: residues 21–40 (SMSKHMFTVASMLMAMPTLY), 54–74 (MADVLMLLTMYMLPLSMISNW), 79–99 (STLYFELVLNLGMMLLINFMC), 105–125 (FYMYFEASLAPLFMLMGLYGA), 135–155 (VLMYTLFSSLFMLLAMALYEV), 168–188 (LVLSLDLQCMLFLAMSMGIAV), 207–227 (PLAGSMLLAGMILKLAVFAMI), 239–259 (VTYTPFVYVMCVMTMMYTSII), 266–286 (LKVIIAYSSISHMAVCMLGML), 297–317 (LVLCIAHGFVSPGLFMMVGGM), 330–350 (FQGLISYMPYLSVYFMMLSFC), 367–387 (LTGAINRAPVLGAMAALSVLL), and 420–440 (VLMITLIVPTMFLGFFPSWVM).

Belongs to the complex I subunit 4 family.

The protein localises to the mitochondrion membrane. The catalysed reaction is a ubiquinone + NADH + 5 H(+)(in) = a ubiquinol + NAD(+) + 4 H(+)(out). Core subunit of the mitochondrial membrane respiratory chain NADH dehydrogenase (Complex I) that is believed to belong to the minimal assembly required for catalysis. Complex I functions in the transfer of electrons from NADH to the respiratory chain. The immediate electron acceptor for the enzyme is believed to be ubiquinone. The polypeptide is NADH-ubiquinone oxidoreductase chain 4 (ND4) (Debaryomyces hansenii (strain ATCC 36239 / CBS 767 / BCRC 21394 / JCM 1990 / NBRC 0083 / IGC 2968) (Yeast)).